The chain runs to 250 residues: Phosphatidylglycerol--prolipoprotein diacylglyceryl transferase (250 aa).

A run of 4 helical transmembrane segments spans residues 11–31, 49–69, 84–104, and 109–129; these read LAIR…LLLA, FLIA…IFEF, QGGL…YIYL, and ESFF…QAIG. R130 lines the a 1,2-diacyl-sn-glycero-3-phospho-(1'-sn-glycerol) pocket. 3 helical membrane-spanning segments follow: residues 169-189, 196-216, and 228-248; these read PTFL…VYLL, GIVF…IEGL, and VAQL…YNII.

It belongs to the Lgt family.

Its subcellular location is the cell membrane. The enzyme catalyses L-cysteinyl-[prolipoprotein] + a 1,2-diacyl-sn-glycero-3-phospho-(1'-sn-glycerol) = an S-1,2-diacyl-sn-glyceryl-L-cysteinyl-[prolipoprotein] + sn-glycerol 1-phosphate + H(+). It participates in protein modification; lipoprotein biosynthesis (diacylglyceryl transfer). Catalyzes the transfer of the diacylglyceryl group from phosphatidylglycerol to the sulfhydryl group of the N-terminal cysteine of a prolipoprotein, the first step in the formation of mature lipoproteins. This chain is Phosphatidylglycerol--prolipoprotein diacylglyceryl transferase, found in Clostridium botulinum (strain 657 / Type Ba4).